We begin with the raw amino-acid sequence, 487 residues long: N-succinylglutamate 5-semialdehyde dehydrogenase (487 aa).

Residues 1-23 are disordered; the sequence is MTHFIKGQWHTGKGHDVASSNPA. 220-225 contributes to the NAD(+) binding site; it reads GSSRTG. Residues Glu-243 and Cys-277 contribute to the active site.

Belongs to the aldehyde dehydrogenase family. AstD subfamily.

It catalyses the reaction N-succinyl-L-glutamate 5-semialdehyde + NAD(+) + H2O = N-succinyl-L-glutamate + NADH + 2 H(+). Its pathway is amino-acid degradation; L-arginine degradation via AST pathway; L-glutamate and succinate from L-arginine: step 4/5. Functionally, catalyzes the NAD-dependent reduction of succinylglutamate semialdehyde into succinylglutamate. The chain is N-succinylglutamate 5-semialdehyde dehydrogenase from Shewanella oneidensis (strain ATCC 700550 / JCM 31522 / CIP 106686 / LMG 19005 / NCIMB 14063 / MR-1).